A 346-amino-acid polypeptide reads, in one-letter code: Glycerol-1-phosphate dehydrogenase [NAD(P)+] (346 aa).

Residues 93-97 (GSIID) and 115-118 (TTAS) each bind NAD(+). Asp120 provides a ligand contact to substrate. An NAD(+)-binding site is contributed by Ser124. Asp167 is a binding site for substrate. Zn(2+)-binding residues include Asp167 and His247. His251 is a substrate binding site. Zn(2+) is bound at residue His263.

It belongs to the glycerol-1-phosphate dehydrogenase family. The cofactor is Zn(2+).

It is found in the cytoplasm. The enzyme catalyses sn-glycerol 1-phosphate + NAD(+) = dihydroxyacetone phosphate + NADH + H(+). It catalyses the reaction sn-glycerol 1-phosphate + NADP(+) = dihydroxyacetone phosphate + NADPH + H(+). The protein operates within membrane lipid metabolism; glycerophospholipid metabolism. Catalyzes the NAD(P)H-dependent reduction of dihydroxyacetonephosphate (DHAP or glycerone phosphate) to glycerol 1-phosphate (G1P). The G1P thus generated is used as the glycerophosphate backbone of phospholipids in the cellular membranes of Archaea. The protein is Glycerol-1-phosphate dehydrogenase [NAD(P)+] of Pyrococcus abyssi (strain GE5 / Orsay).